A 158-amino-acid polypeptide reads, in one-letter code: uncharacterized protein (158 aa).

Transmembrane regions (helical) follow at residues 45-65, 76-96, and 106-126; these read GIFF…PAVI, LAIG…IFAW, and FILV…VFAL.

It to U.parvum UU007, UU041 and UU042.

The protein resides in the cell membrane. This is an uncharacterized protein from Ureaplasma parvum serovar 3 (strain ATCC 700970).